Consider the following 213-residue polypeptide: Cysteine dioxygenase (213 aa).

Fe cation is bound by residues His100, His102, and His160. The 3'-(S-cysteinyl)-tyrosine (Cys-Tyr) cross-link spans 107-177 (CVMKVLKGSL…TNFAISLHLY (71 aa)).

It belongs to the cysteine dioxygenase family. It depends on Fe cation as a cofactor. In terms of processing, the thioether cross-link between Cys-107 and Tyr-177 plays a structural role through stabilizing the Fe(2+) ion, and prevents the production of highly damaging free hydroxyl radicals by holding the oxygen radical via hydroxyl hydrogen.

It carries out the reaction L-cysteine + O2 = 3-sulfino-L-alanine + H(+). This Ajellomyces capsulatus (strain G186AR / H82 / ATCC MYA-2454 / RMSCC 2432) (Darling's disease fungus) protein is Cysteine dioxygenase (CDO1).